A 263-amino-acid polypeptide reads, in one-letter code: Type II restriction enzyme TaqI (263 aa).

Post-translationally, only 15% of purified enzyme (upon expression in E.coli) can be sequenced, suggesting the remainder has a blocked N-terminus.

The enzyme catalyses Endonucleolytic cleavage of DNA to give specific double-stranded fragments with terminal 5'-phosphates.. Its function is as follows. A P subtype restriction enzyme that recognizes the double-stranded sequence 5'-TCGA-3' and cleaves after T-1. The protein is Type II restriction enzyme TaqI (taqIR) of Thermus aquaticus.